Here is a 909-residue protein sequence, read N- to C-terminus: Zinc finger and BTB domain-containing protein 41 (909 aa).

In terms of domain architecture, BTB spans 88-152; that stretch reads CDLLIIVEGK…LYTSEFFVYK (65 aa). The C2H2-type 1 zinc-finger motif lies at 207–230; it reads HQCKFCSRHFCYKKSLENHLAKTH. Positions 252–344 are disordered; sequence RSKRNRKCPV…PEAGDSVGNV (93 aa). The segment covering 266 to 275 has biased composition (acidic residues); it reads TSDDEQESGD. The segment covering 284 to 295 has biased composition (basic and acidic residues); the sequence is NFDKEKSDRNDS. Acidic residues predominate over residues 296-322; sequence EDPGSEYNAEEDELEEEMSDEYSDIEE. C2H2-type zinc fingers lie at residues 361–383, 389–411, 422–445, 463–485, 491–514, 518–541, 547–569, 575–597, 603–625, 631–654, 668–690, 696–718, and 724–747; these read LQCPKCDKTFDRIGKYESHTRVH, FECDICHQRYSTKSNLTVHRKKH, HKCPYCNKLHASKKTLAKHVKRFH, WKCDICKKSFTRRPHLEEHMILH, FKCTYCEEHFKSRFARLKHQEKFH, FPCDICGRQFNDTGNLKRHIECTH, WTCFICGKSVRERTTLKEHLRIH, HLCSICGQSFRHGSSYRLHLRVH, YECDECGKTFIRHDHLTKHKKIH, HQCEECGKCFGRRDHLTVHYKSVH, HQCDVCKKIFKGKSSLEMHFRTH, YKCQICNQSFRIKKTLTKHLVIH, and FNCQHCNATFKRKDKLKYHIDHVH.

The protein localises to the nucleus. In terms of biological role, may be involved in transcriptional regulation. In Homo sapiens (Human), this protein is Zinc finger and BTB domain-containing protein 41 (ZBTB41).